We begin with the raw amino-acid sequence, 854 residues long: Putative COX1/OXI3 intron 2 protein (854 aa).

The Reverse transcriptase domain maps to 329–613 (LSKDINTNMF…EGVSFLGYDV (285 aa)).

Its subcellular location is the mitochondrion. The sequence is that of Putative COX1/OXI3 intron 2 protein (AI2) from Saccharomyces cerevisiae (strain ATCC 204508 / S288c) (Baker's yeast).